The chain runs to 1156 residues: MSFSDDGWGAEAEVKVAEDVPEKNVPPPVEPPRAPQSTAIKTEPERNSDEPSAGFGIDPITTSKTFGSQTTPKTEFGGAPSLSGFGGNAAAAAANKTSFDQQGNGFGGAAKHGFGGVGGAPSSFGANVIPVNKPSLGHKTTGFGGEPKHVSGGAFSSANNFDQQDKGFGGAASSGFGNGSMLTNQKVGLENQTTGVGASEVPTSKPSSFGQQPAVVSGFGGAAKMGFGGSSSSGFGGQKAGATESSGFPTKETSTSQPGFGGDSSTGFGSGLKAGFGGHGAGAAENSGLPTETTGFGGKLPSAGFGASSSNESAFGQQSKGFGGATKNGFGGDSSSSFGSGSKAGFGGTSSSGIGGQKPGATESSGFPTKETSTSGGTFGSGFGGKPTSTGFGAPSTTDSSSGQQTAGFGGASKPGFGGDSSTGFGSGLKAGFGGHRASTAENSGLPTETTGFGGKLPPAGFGASSSNESAFGQQSKGFGGATKNGFGGDSSNSFGKRDSGFGGPQDQGFGDTDAPSKSGLGSFNTGGGAVKSAFGAAGFGSSSNFGNGNTFGEPSDNQRGNWDGGERPRGCHNCGEEGHISKECDKPKVPRFPCRNCEQLGHFASDCDQPRVPRGPCRNCGIEGHFAVDCDQPKVPRGPCRNCGQEGHFAKDCQNERVRMEPTEPCRRCAEEGHWGYECPTRPKDLQGNFLESYDFVFTPDDKMFEDAVNNDDKIDFDQKVVASTGKVEIPDMASFDGFKILPQDLHDNLKRMKMNRPTPIQRASFFPIMHGNDVVACAHTGSGKTLAFLIPFVIKLMEEFEKDRDVTDEKPSPRLLIVAPTRELVNQTFTTARQLTYETGLKCGLAFGGYSRNANVQHLRSFSQLNILVATMGRLQDFVNAGEVSLSKMKYIVLDEADRMVDSNDFGEEVSKIIGSPGERTQQTVLFSASFSEDLQSDDLPKFVKEGYTMLQVDKFGTANEKIDQKILPVPRTEKRDAIYKLLGIDENTVTLLPDAPIEKQKTLIFVNSVKFCDTLAALISSAGVSTISMHSYQNQEQRDRTLDDFRRGKYQCMVASNVCARGLNIAGLDHVVNYDMPDKNGFDEYVNRIGRTGRAGFTGTSTAFVDVENDTDIIPCLVSILNEAKKEVPEWLTEGAGHQEEGGDDWNEQEQEW.

4 disordered regions span residues Met1 to Ser81, Thr194 to Pro213, Ser231 to Thr423, and His436 to Gly522. The span at Ala12–Glu22 shows a compositional bias: basic and acidic residues. The span at Asn24–Ala34 shows a compositional bias: pro residues. Polar residues-rich tracts occupy residues Ile60–Lys73, Thr194–Gln211, and Thr243–Pro258. Residues Gly259–Ala281 show a composition bias toward gly residues. The segment covering Ala307 to Ser319 has biased composition (polar residues). Composition is skewed to gly residues over residues Gly321–Gly332 and Ser342–Lys358. 2 stretches are compositionally biased toward polar residues: residues Thr362–Glu371 and Pro395–Thr406. A compositionally biased stretch (gly residues) spans Gly408 to Thr423. Composition is skewed to polar residues over residues Thr440–Thr451 and Ala464–Ser476. A compositionally biased stretch (gly residues) spans Gly478–Gly489. CCHC-type zinc fingers lie at residues Arg570 to Lys587, Phe593 to Gln610, Gly616 to Gln633, Gly639 to Asn656, and Glu665 to Thr682. The short motif at Ser736–Arg764 is the Q motif element. One can recognise a Helicase ATP-binding domain in the interval Phe767–Thr951. Ala780–Thr787 lines the ATP pocket. The short motif at Asp897–Asp900 is the DEAD box element. Positions Gly986 to Ala1139 constitute a Helicase C-terminal domain. The interval Leu1135 to Trp1156 is disordered. The span at Gly1145–Trp1156 shows a compositional bias: acidic residues.

Belongs to the DEAD box helicase family. DDX4/VASA subfamily. As to quaternary structure, interacts (via C-terminus) with kgb-1.

It carries out the reaction ATP + H2O = ADP + phosphate + H(+). Probable ATP-binding RNA helicase. May act redundantly with the P-granule component glh-1 to regulate the formation of the granular structure of P-granules in embryos. May protect somatic cells from excessive apoptosis during normal development. The protein is ATP-dependent RNA helicase glh-4 of Caenorhabditis elegans.